The chain runs to 269 residues: Putative pyruvate, phosphate dikinase regulatory protein (269 aa).

Position 147 to 154 (147 to 154) interacts with ADP; sequence GVSRTSKT.

This sequence belongs to the pyruvate, phosphate/water dikinase regulatory protein family. PDRP subfamily.

The enzyme catalyses N(tele)-phospho-L-histidyl/L-threonyl-[pyruvate, phosphate dikinase] + ADP = N(tele)-phospho-L-histidyl/O-phospho-L-threonyl-[pyruvate, phosphate dikinase] + AMP + H(+). It catalyses the reaction N(tele)-phospho-L-histidyl/O-phospho-L-threonyl-[pyruvate, phosphate dikinase] + phosphate + H(+) = N(tele)-phospho-L-histidyl/L-threonyl-[pyruvate, phosphate dikinase] + diphosphate. Functionally, bifunctional serine/threonine kinase and phosphorylase involved in the regulation of the pyruvate, phosphate dikinase (PPDK) by catalyzing its phosphorylation/dephosphorylation. The protein is Putative pyruvate, phosphate dikinase regulatory protein of Geotalea daltonii (strain DSM 22248 / JCM 15807 / FRC-32) (Geobacter daltonii).